We begin with the raw amino-acid sequence, 574 residues long: Amino-acid acetyltransferase, mitochondrial (574 aa).

Residues 1 to 13 (MWRRIFAHELKYD) constitute a mitochondrion transit peptide. The N-acetyltransferase domain occupies 392–560 (KGAKPSSNSP…KRLREFMRSV (169 aa)).

Belongs to the acetyltransferase family. As to quaternary structure, interacts with the acetylglutamate kinase chain of AGR5,6.

Its subcellular location is the mitochondrion. The enzyme catalyses L-glutamate + acetyl-CoA = N-acetyl-L-glutamate + CoA + H(+). It functions in the pathway amino-acid biosynthesis; L-arginine biosynthesis; N(2)-acetyl-L-ornithine from L-glutamate: step 1/4. Its activity is regulated as follows. Feedback inhibition by L-arginine. Its function is as follows. N-acetylglutamate synthase involved in arginine biosynthesis. The polypeptide is Amino-acid acetyltransferase, mitochondrial (ARG2) (Saccharomyces cerevisiae (strain RM11-1a) (Baker's yeast)).